A 269-amino-acid chain; its full sequence is Phosphonoacetaldehyde hydrolase (269 aa).

The Nucleophile role is filled by Asp9. Residues Asp9 and Ala11 each contribute to the Mg(2+) site. The active-site Schiff-base intermediate with substrate is Lys50. Residue Asp184 coordinates Mg(2+).

It belongs to the HAD-like hydrolase superfamily. PhnX family. Homodimer. It depends on Mg(2+) as a cofactor.

It catalyses the reaction phosphonoacetaldehyde + H2O = acetaldehyde + phosphate + H(+). Involved in phosphonate degradation. This chain is Phosphonoacetaldehyde hydrolase, found in Lysinibacillus sphaericus (strain C3-41).